The sequence spans 154 residues: Small ribosomal subunit protein uS9 (154 aa).

The tract at residues 133–154 is disordered; sequence RAKESKKYGLKKARKAPQYSKR. Residues 140–154 show a composition bias toward basic residues; sequence YGLKKARKAPQYSKR.

Belongs to the universal ribosomal protein uS9 family.

The polypeptide is Small ribosomal subunit protein uS9 (Salinispora tropica (strain ATCC BAA-916 / DSM 44818 / JCM 13857 / NBRC 105044 / CNB-440)).